A 205-amino-acid chain; its full sequence is Holliday junction branch migration complex subunit RuvA (205 aa).

The tract at residues 1–64 is domain I; the sequence is MIGRLRGVLI…EDAQLLYGFI (64 aa). The domain II stretch occupies residues 65–143; sequence TKKERSLFRL…SLMEASVGSE (79 aa). The flexible linker stretch occupies residues 144–156; the sequence is REFVLQSNYSPAP. A domain III region spans residues 157-205; that stretch reads TVNSAEEDAISALLSLGYKPPQASKAVSAAYKEGMDSETLIKAALKSML.

Belongs to the RuvA family. In terms of assembly, homotetramer. Forms an RuvA(8)-RuvB(12)-Holliday junction (HJ) complex. HJ DNA is sandwiched between 2 RuvA tetramers; dsDNA enters through RuvA and exits via RuvB. An RuvB hexamer assembles on each DNA strand where it exits the tetramer. Each RuvB hexamer is contacted by two RuvA subunits (via domain III) on 2 adjacent RuvB subunits; this complex drives branch migration. In the full resolvosome a probable DNA-RuvA(4)-RuvB(12)-RuvC(2) complex forms which resolves the HJ.

Its subcellular location is the cytoplasm. Functionally, the RuvA-RuvB-RuvC complex processes Holliday junction (HJ) DNA during genetic recombination and DNA repair, while the RuvA-RuvB complex plays an important role in the rescue of blocked DNA replication forks via replication fork reversal (RFR). RuvA specifically binds to HJ cruciform DNA, conferring on it an open structure. The RuvB hexamer acts as an ATP-dependent pump, pulling dsDNA into and through the RuvAB complex. HJ branch migration allows RuvC to scan DNA until it finds its consensus sequence, where it cleaves and resolves the cruciform DNA. This chain is Holliday junction branch migration complex subunit RuvA, found in Shewanella sp. (strain MR-4).